The sequence spans 156 residues: Ribosomal RNA large subunit methyltransferase H (156 aa).

S-adenosyl-L-methionine-binding positions include leucine 73, glycine 104, and 123-128; that span reads LSPLTL.

The protein belongs to the RNA methyltransferase RlmH family. As to quaternary structure, homodimer.

The protein localises to the cytoplasm. It catalyses the reaction pseudouridine(1915) in 23S rRNA + S-adenosyl-L-methionine = N(3)-methylpseudouridine(1915) in 23S rRNA + S-adenosyl-L-homocysteine + H(+). Its function is as follows. Specifically methylates the pseudouridine at position 1915 (m3Psi1915) in 23S rRNA. The polypeptide is Ribosomal RNA large subunit methyltransferase H (Aliivibrio salmonicida (strain LFI1238) (Vibrio salmonicida (strain LFI1238))).